Reading from the N-terminus, the 330-residue chain is Aspartate--ammonia ligase (330 aa).

The protein belongs to the class-II aminoacyl-tRNA synthetase family. AsnA subfamily.

Its subcellular location is the cytoplasm. It carries out the reaction L-aspartate + NH4(+) + ATP = L-asparagine + AMP + diphosphate + H(+). It functions in the pathway amino-acid biosynthesis; L-asparagine biosynthesis; L-asparagine from L-aspartate (ammonia route): step 1/1. This is Aspartate--ammonia ligase from Streptococcus pneumoniae serotype 19F (strain G54).